The primary structure comprises 87 residues: Pro-gurmarin (87 aa).

The first 20 residues, 1–20 (MAKFAAIVLLILVASATVNA), serve as a signal peptide directing secretion. A propeptide spanning residues 21-52 (VKEHDELPTTGMSRKILLQPVFKSLIISIAEG) is cleaved from the precursor. Q53 is modified (pyrrolidone carboxylic acid). Disulfide bonds link C55-C70, C62-C75, and C69-C85.

As to expression, expressed in leaves (at protein level).

Its function is as follows. Peptide that strongly, but reversibly, suppresses the sweet taste-response to various sweeteners, including sugars, sweet amino acids and the artificial sweetener saccharin. In rodents, potentially binds to a sweet taste receptor present on apical microvilli of a subset of taste bud cells. Highly effective at blocking the sweet taste-response in rodents such as rats and mice, though mice may possess a mix of gurmarin-sensitive and -insensitive receptors. Has almost no effect on the sweet taste-response in humans. Inhibits Staphylococcus aureus biofilm formation without affecting bacterial viability. May be one of at least 9 different disulfide-rich peptides produced with varying properties. This is Pro-gurmarin from Gymnema sylvestre (Gurmar).